Here is a 116-residue protein sequence, read N- to C-terminus: MRHRCRVKKLSKPADQRRALLRSLTTELIRHGKITTTLIRAKVLRSEVEKMITLAKNGSLAARREALGYIFDKQLVHALFEQVPTRYGDRQGGYTRILHTVPRRGDNAKMAIIELV.

This sequence belongs to the bacterial ribosomal protein bL17 family. In terms of assembly, part of the 50S ribosomal subunit. Contacts protein L32.

In Nostoc punctiforme (strain ATCC 29133 / PCC 73102), this protein is Large ribosomal subunit protein bL17.